Here is a 413-residue protein sequence, read N- to C-terminus: MSISSASVSPAYRDPLIAQIVERGVAEIFPGGAAALAERLAQADRPLRVKLGIDPTRPDLHLGHSVVLRKLRQFQDAGHVAILLIGDFTALVGDPTGQSEARPRLTPAEVEENARTYLEQAGKILDFETPGRLEVRRNSEWLAHLTLSELIELQAQMTVGQMLAKEDFAQRYQAGTPVYLHEFLYPLLQGYDSVALAADVELGGTDQRFNLLTGRDLQIWKGQAPQFCLTVPLLEGLDGYQKMSKSKNNYVGLTEDPLTMYSKLEKVPDHLVERYFELLTSVPLAELPQDPRQRQILLAKTLVAQFHSPAAAEEAQRTAQALVLDGILAETGSIPTFAIDGLSYPVKLSYILRECGLCKSAAEARRQIQGGAVRLDGQKVEDPDLEFAHASELAGRILQVGKKAFRRLVKGAD.

Residues 55-64 (PTRPDLHLGH) carry the 'HIGH' region motif. Positions 242–246 (KMSKS) match the 'KMSKS' region motif. Residue Lys245 coordinates ATP. In terms of domain architecture, S4 RNA-binding spans 346-410 (VKLSYILREC…GKKAFRRLVK (65 aa)).

It belongs to the class-I aminoacyl-tRNA synthetase family. TyrS type 2 subfamily. In terms of assembly, homodimer.

Its subcellular location is the cytoplasm. It catalyses the reaction tRNA(Tyr) + L-tyrosine + ATP = L-tyrosyl-tRNA(Tyr) + AMP + diphosphate + H(+). Functionally, catalyzes the attachment of tyrosine to tRNA(Tyr) in a two-step reaction: tyrosine is first activated by ATP to form Tyr-AMP and then transferred to the acceptor end of tRNA(Tyr). In Synechococcus sp. (strain JA-2-3B'a(2-13)) (Cyanobacteria bacterium Yellowstone B-Prime), this protein is Tyrosine--tRNA ligase.